Here is a 412-residue protein sequence, read N- to C-terminus: Na(+)-translocating NADH-quinone reductase subunit B (412 aa).

The next 3 helical transmembrane spans lie at 57-77 (MILV…NVGL), 127-147 (VFFL…EVLF), and 163-183 (SILF…ALGI). At T236 the chain carries FMN phosphoryl threonine. The next 5 helical transmembrane spans lie at 270 to 290 (GSIG…ILFG), 297 to 317 (IVAG…VIGS), 322 to 342 (MFAM…GMMF), 358 to 378 (WSYG…NPAY), and 381 to 401 (GMML…YLVV).

The protein belongs to the NqrB/RnfD family. Composed of six subunits; NqrA, NqrB, NqrC, NqrD, NqrE and NqrF. FMN is required as a cofactor.

The protein resides in the cell inner membrane. The enzyme catalyses a ubiquinone + n Na(+)(in) + NADH + H(+) = a ubiquinol + n Na(+)(out) + NAD(+). Functionally, NQR complex catalyzes the reduction of ubiquinone-1 to ubiquinol by two successive reactions, coupled with the transport of Na(+) ions from the cytoplasm to the periplasm. NqrA to NqrE are probably involved in the second step, the conversion of ubisemiquinone to ubiquinol. This chain is Na(+)-translocating NADH-quinone reductase subunit B, found in Klebsiella pneumoniae subsp. pneumoniae (strain ATCC 700721 / MGH 78578).